Consider the following 445-residue polypeptide: uncharacterized protein (445 aa).

8 helical membrane-spanning segments follow: residues 16–36 (IVSLGVTASSFLFINGVAFLI), 52–72 (LLASMPSWGLVVTMFAWGYLL), 98–118 (VHSLLWIGVFLFLGGMAAGGC), 168–188 (GLMFPAVVCTLAAVASVLGIV), 219–239 (ASALLMMPQTVTVTFMLVWLI), 243–263 (GWSVAQAGVLVTISQLLGALG), 283–303 (LIAAAAAATLFLLAAVDNEGS), and 366–386 (AAYPTAWALCGVFPLAAVPLV). The tract at residues 417–445 (AWPNGPRRPGPPGQPRRVRQGGTAITPPT) is disordered.

It belongs to the major facilitator superfamily.

The protein resides in the cell membrane. This is an uncharacterized protein from Mycobacterium tuberculosis (strain CDC 1551 / Oshkosh).